We begin with the raw amino-acid sequence, 817 residues long: Protein-glutamine gamma-glutamyltransferase K (817 aa).

Disordered stretches follow at residues 1–38 and 59–105; these read MMDG…SRRG and DDWG…DGTI. A membrane anchorage region region spans residues 1–100; that stretch reads MMDGPRSDVG…VSRGSGVNAA (100 aa). A compositionally biased stretch (pro residues) spans 17 to 26; the sequence is LQPPTTPSPE. Position 22 is a phosphothreonine (threonine 22). 6 positions are modified to phosphoserine: serine 24, serine 68, serine 82, serine 85, serine 92, and serine 95. The span at 71 to 84 shows a compositional bias: low complexity; the sequence is RGSSSGTRRPGSRG. Catalysis depends on residues cysteine 377, histidine 436, and aspartate 459. The Ca(2+) site is built by asparagine 499, aspartate 501, glutamate 548, and glutamate 553. The segment at 793 to 817 is disordered; that stretch reads GGFFSDAGGDSHLGETIPMASRGGA.

It belongs to the transglutaminase superfamily. Transglutaminase family. As to quaternary structure, interacts with PLAAT4. Ca(2+) is required as a cofactor. Palmitoylated. Post-translationally, the membrane anchorage region possesses a cluster of five cysteines within which fatty acid(s) may become thioester-linked. It is subject to phorbol ester-stimulated phosphorylation and is hypersensitive to proteolysis, which releases the enzyme in a soluble form. In terms of processing, tyrosine-phosphorylated.

The protein resides in the membrane. It catalyses the reaction L-glutaminyl-[protein] + L-lysyl-[protein] = [protein]-L-lysyl-N(6)-5-L-glutamyl-[protein] + NH4(+). Functionally, catalyzes the cross-linking of proteins and the conjugation of polyamines to proteins. Responsible for cross-linking epidermal proteins during formation of the stratum corneum. Involved in cell proliferation. This chain is Protein-glutamine gamma-glutamyltransferase K (TGM1), found in Homo sapiens (Human).